A 127-amino-acid polypeptide reads, in one-letter code: V-type proton ATPase subunit F (127 aa).

The protein belongs to the V-ATPase F subunit family. In terms of assembly, V-ATPase is a heteromultimeric enzyme made up of two complexes: the ATP-hydrolytic V1 complex and the proton translocation V0 complex. The V1 complex consists of three catalytic AB heterodimers that form a heterohexamer, three peripheral stalks each consisting of EG heterodimers, one central rotor including subunits D and F, and the regulatory subunits C and H. The proton translocation complex V0 consists of the proton transport subunit a, a ring of proteolipid subunits c9c'', rotary subunit d, subunits e and f, and the accessory subunits VhaAC45 and ATP6AP2.

Its function is as follows. Subunit of the V1 complex of vacuolar(H+)-ATPase (V-ATPase), a multisubunit enzyme composed of a peripheral complex (V1) that hydrolyzes ATP and a membrane integral complex (V0) that translocates protons. V-ATPase is responsible for acidifying and maintaining the pH of intracellular compartments and in some cell types, is targeted to the plasma membrane, where it is responsible for acidifying the extracellular environment. The polypeptide is V-type proton ATPase subunit F (Vha14) (Anopheles gambiae (African malaria mosquito)).